The sequence spans 436 residues: 5-methylthioadenosine/S-adenosylhomocysteine deaminase (436 aa).

Zn(2+)-binding residues include histidine 66 and histidine 68. Positions 95, 147, 161, and 187 each coordinate substrate. Histidine 214 contributes to the Zn(2+) binding site. 2 residues coordinate substrate: glutamate 217 and aspartate 303. Aspartate 303 contributes to the Zn(2+) binding site.

It belongs to the metallo-dependent hydrolases superfamily. MTA/SAH deaminase family. It depends on Zn(2+) as a cofactor.

The enzyme catalyses S-adenosyl-L-homocysteine + H2O + H(+) = S-inosyl-L-homocysteine + NH4(+). The catalysed reaction is S-methyl-5'-thioadenosine + H2O + H(+) = S-methyl-5'-thioinosine + NH4(+). Its function is as follows. Catalyzes the deamination of 5-methylthioadenosine and S-adenosyl-L-homocysteine into 5-methylthioinosine and S-inosyl-L-homocysteine, respectively. Is also able to deaminate adenosine. The sequence is that of 5-methylthioadenosine/S-adenosylhomocysteine deaminase from Symbiobacterium thermophilum (strain DSM 24528 / JCM 14929 / IAM 14863 / T).